The chain runs to 155 residues: DNA gyrase inhibitor (155 aa).

This sequence belongs to the DNA gyrase inhibitor family. Interacts with DNA gyrase.

It is found in the cytoplasm. Inhibits the supercoiling activity of DNA gyrase. Acts by inhibiting DNA gyrase at an early step, prior to (or at the step of) binding of DNA by the gyrase. It protects cells against toxins that target DNA gyrase, by inhibiting activity of these toxins and reducing the formation of lethal double-strand breaks in the cell. The polypeptide is DNA gyrase inhibitor (Edwardsiella piscicida).